We begin with the raw amino-acid sequence, 224 residues long: Flagellar L-ring protein (224 aa).

Positions 1 to 15 (MARYLLLASTLLLAA) are cleaved as a signal peptide. Cysteine 16 carries the N-palmitoyl cysteine lipid modification. A lipid anchor (S-diacylglycerol cysteine) is attached at cysteine 16.

This sequence belongs to the FlgH family. As to quaternary structure, the basal body constitutes a major portion of the flagellar organelle and consists of four rings (L,P,S, and M) mounted on a central rod.

It is found in the cell outer membrane. It localises to the bacterial flagellum basal body. In terms of biological role, assembles around the rod to form the L-ring and probably protects the motor/basal body from shearing forces during rotation. This Shewanella sp. (strain ANA-3) protein is Flagellar L-ring protein.